Reading from the N-terminus, the 96-residue chain is Uteroglobin (96 aa).

The first 19 residues, 1-19, serve as a signal peptide directing secretion; it reads MKIAITITVLMLSICCSSA.

It belongs to the secretoglobin family. As to quaternary structure, antiparallel homodimer; disulfide-linked. Interaction with LMBR1L is controversial. As to expression, club cells (nonciliated cells of the surface epithelium of the pulmonary airways).

It is found in the secreted. In terms of biological role, binds phosphatidylcholine, phosphatidylinositol, polychlorinated biphenyls (PCB) and weakly progesterone, potent inhibitor of phospholipase A2. The polypeptide is Uteroglobin (Scgb1a1) (Rattus norvegicus (Rat)).